A 697-amino-acid polypeptide reads, in one-letter code: Long-chain-fatty-acid--CoA ligase 6 (697 aa).

Residues 25-45 traverse the membrane as a helical; Signal-anchor for type III membrane protein segment; that stretch reads LSATTLVSMGALAAILAYWLT. Residues 46 to 697 lie on the Cytoplasmic side of the membrane; sequence HRPKALQPPC…QIEELYSISM (652 aa).

It belongs to the ATP-dependent AMP-binding enzyme family. It depends on Mg(2+) as a cofactor. Expressed predominantly in brain and, to a much lesser extent, in heart and adrenal.

The protein resides in the mitochondrion outer membrane. It is found in the peroxisome membrane. Its subcellular location is the microsome membrane. The protein localises to the endoplasmic reticulum membrane. It carries out the reaction a long-chain fatty acid + ATP + CoA = a long-chain fatty acyl-CoA + AMP + diphosphate. The enzyme catalyses (5Z,8Z,11Z,14Z)-eicosatetraenoate + ATP + CoA = (5Z,8Z,11Z,14Z)-eicosatetraenoyl-CoA + AMP + diphosphate. It catalyses the reaction 15-hydroxy-(5Z,8Z,11Z,13E)-eicosatetraenoate + ATP + CoA = 15-hydroxy-(5Z,8Z,11Z,13E)-eicosatetraenoyl-CoA + AMP + diphosphate. The catalysed reaction is 12-hydroxy-(5Z,8Z,10E,14Z)-eicosatetraenoate + ATP + CoA = 12-hydroxy-(5Z,8Z,10E,14Z)-eicosatetraenoyl-CoA + AMP + diphosphate. It carries out the reaction 5-hydroxy-(6E,8Z,11Z,14Z)-eicosatetraenoate + ATP + CoA = 5-hydroxy-(6E,8Z,11Z,14Z)-eicosatetraenoyl-CoA + AMP + diphosphate. The enzyme catalyses hexadecanoate + ATP + CoA = hexadecanoyl-CoA + AMP + diphosphate. It catalyses the reaction (E)-hexadec-2-enoate + ATP + CoA = (2E)-hexadecenoyl-CoA + AMP + diphosphate. Catalyzes the conversion of long-chain fatty acids to their active form acyl-CoA for both synthesis of cellular lipids, and degradation via beta-oxidation. Plays an important role in fatty acid metabolism in brain and the acyl-CoAs produced may be utilized exclusively for the synthesis of the brain lipid. The polypeptide is Long-chain-fatty-acid--CoA ligase 6 (Rattus norvegicus (Rat)).